The chain runs to 63 residues: Protein DsrB (63 aa).

The protein belongs to the DsrB family.

This chain is Protein DsrB, found in Yersinia pseudotuberculosis serotype O:1b (strain IP 31758).